A 179-amino-acid polypeptide reads, in one-letter code: Large ribosomal subunit protein uL5 (179 aa).

Belongs to the universal ribosomal protein uL5 family. In terms of assembly, part of the 50S ribosomal subunit; part of the 5S rRNA/L5/L18/L25 subcomplex. Contacts the 5S rRNA and the P site tRNA. Forms a bridge to the 30S subunit in the 70S ribosome.

This is one of the proteins that bind and probably mediate the attachment of the 5S RNA into the large ribosomal subunit, where it forms part of the central protuberance. In the 70S ribosome it contacts protein S13 of the 30S subunit (bridge B1b), connecting the 2 subunits; this bridge is implicated in subunit movement. Contacts the P site tRNA; the 5S rRNA and some of its associated proteins might help stabilize positioning of ribosome-bound tRNAs. This Bacillus velezensis (strain DSM 23117 / BGSC 10A6 / LMG 26770 / FZB42) (Bacillus amyloliquefaciens subsp. plantarum) protein is Large ribosomal subunit protein uL5.